Here is a 287-residue protein sequence, read N- to C-terminus: Prepilin leader peptidase/N-methyltransferase (287 aa).

The next 6 membrane-spanning stretches (helical) occupy residues 10 to 30, 101 to 121, 125 to 145, 177 to 197, 226 to 246, and 253 to 273; these read LGFP…NVVI, ISIQ…ASVW, FGWQ…MSGI, KPAL…WWLF, ILPI…IWLF, and ATPI…FFWG.

Belongs to the peptidase A24 family.

It localises to the cell inner membrane. It carries out the reaction Typically cleaves a -Gly-|-Phe- bond to release an N-terminal, basic peptide of 5-8 residues from type IV prepilin, and then N-methylates the new N-terminal amino group, the methyl donor being S-adenosyl-L-methionine.. Its function is as follows. Plays an essential role in type IV pili and type II pseudopili formation by proteolytically removing the leader sequence from substrate proteins and subsequently monomethylating the alpha-amino group of the newly exposed N-terminal phenylalanine. The polypeptide is Prepilin leader peptidase/N-methyltransferase (xpsO) (Xanthomonas campestris pv. campestris (strain ATCC 33913 / DSM 3586 / NCPPB 528 / LMG 568 / P 25)).